The following is a 484-amino-acid chain: tRNA sulfurtransferase (484 aa).

A THUMP domain is found at 63-167 (EAFGERLACI…NDNLYLIDKR (105 aa)). Residues 185-186 (LI), K267, G289, and Q298 each bind ATP. C346 and C458 are joined by a disulfide. The region spanning 406–484 (INANEIIIDV…GYTNVKVYRP (79 aa)) is the Rhodanese domain. The active-site Cysteine persulfide intermediate is C458.

The protein belongs to the ThiI family.

It is found in the cytoplasm. The enzyme catalyses [ThiI sulfur-carrier protein]-S-sulfanyl-L-cysteine + a uridine in tRNA + 2 reduced [2Fe-2S]-[ferredoxin] + ATP + H(+) = [ThiI sulfur-carrier protein]-L-cysteine + a 4-thiouridine in tRNA + 2 oxidized [2Fe-2S]-[ferredoxin] + AMP + diphosphate. It carries out the reaction [ThiS sulfur-carrier protein]-C-terminal Gly-Gly-AMP + S-sulfanyl-L-cysteinyl-[cysteine desulfurase] + AH2 = [ThiS sulfur-carrier protein]-C-terminal-Gly-aminoethanethioate + L-cysteinyl-[cysteine desulfurase] + A + AMP + 2 H(+). It functions in the pathway cofactor biosynthesis; thiamine diphosphate biosynthesis. Its function is as follows. Catalyzes the ATP-dependent transfer of a sulfur to tRNA to produce 4-thiouridine in position 8 of tRNAs, which functions as a near-UV photosensor. Also catalyzes the transfer of sulfur to the sulfur carrier protein ThiS, forming ThiS-thiocarboxylate. This is a step in the synthesis of thiazole, in the thiamine biosynthesis pathway. The sulfur is donated as persulfide by IscS. The chain is tRNA sulfurtransferase from Shewanella halifaxensis (strain HAW-EB4).